The primary structure comprises 21 residues: APSQSTVTALLTSCVSYIDDQ.

The sequence is that of Pollen allergen Ole e 7 from Olea europaea (Common olive).